A 378-amino-acid chain; its full sequence is Chorismate synthase (378 aa).

Arginine 50 serves as a coordination point for NADP(+). FMN is bound by residues 127–129 (RAS), 255–256 (NA), glycine 300, 315–319 (KPTPS), and arginine 342.

This sequence belongs to the chorismate synthase family. The cofactor is FMNH2.

It carries out the reaction 5-O-(1-carboxyvinyl)-3-phosphoshikimate = chorismate + phosphate. The protein operates within metabolic intermediate biosynthesis; chorismate biosynthesis; chorismate from D-erythrose 4-phosphate and phosphoenolpyruvate: step 7/7. Functionally, catalyzes the anti-1,4-elimination of the C-3 phosphate and the C-6 proR hydrogen from 5-enolpyruvylshikimate-3-phosphate (EPSP) to yield chorismate, which is the branch point compound that serves as the starting substrate for the three terminal pathways of aromatic amino acid biosynthesis. This reaction introduces a second double bond into the aromatic ring system. This chain is Chorismate synthase, found in Methanocaldococcus jannaschii (strain ATCC 43067 / DSM 2661 / JAL-1 / JCM 10045 / NBRC 100440) (Methanococcus jannaschii).